The sequence spans 110 residues: Large ribosomal subunit protein uL24 (110 aa).

It belongs to the universal ribosomal protein uL24 family. Part of the 50S ribosomal subunit.

In terms of biological role, one of two assembly initiator proteins, it binds directly to the 5'-end of the 23S rRNA, where it nucleates assembly of the 50S subunit. Its function is as follows. One of the proteins that surrounds the polypeptide exit tunnel on the outside of the subunit. In Caldicellulosiruptor saccharolyticus (strain ATCC 43494 / DSM 8903 / Tp8T 6331), this protein is Large ribosomal subunit protein uL24.